A 209-amino-acid polypeptide reads, in one-letter code: Large ribosomal subunit protein uL3 (209 aa).

Q150 carries the post-translational modification N5-methylglutamine.

It belongs to the universal ribosomal protein uL3 family. As to quaternary structure, part of the 50S ribosomal subunit. Forms a cluster with proteins L14 and L19. Post-translationally, methylated by PrmB.

In terms of biological role, one of the primary rRNA binding proteins, it binds directly near the 3'-end of the 23S rRNA, where it nucleates assembly of the 50S subunit. The polypeptide is Large ribosomal subunit protein uL3 (Aliivibrio fischeri (strain MJ11) (Vibrio fischeri)).